A 365-amino-acid polypeptide reads, in one-letter code: Aminotransferase poxL (365 aa).

Arginine 92 lines the pyridoxal 5'-phosphate pocket. Residue lysine 193 is modified to N6-(pyridoxal phosphate)lysine. Glutamate 229 is a pyridoxal 5'-phosphate binding site.

It belongs to the class-IV pyridoxal-phosphate-dependent aminotransferase family. Pyridoxal 5'-phosphate is required as a cofactor.

Its pathway is secondary metabolite biosynthesis. Its function is as follows. Aminotransferase; part of the gene cluster that mediates the biosynthesis of oxaleimides, cytotoxic compounds containing an unusual disubstituted succinimide moiety. The first step of the pathway is provided by the HR-PKS poxF that serves in a new mode of collaborative biosynthesis with the PKS-NRPS poxE, by providing the olefin containing amino acid substrate via the synthesis of an ACP-bound dec-4-enoate. The cytochrome P450 monooxygenase poxM-catalyzed oxidation at the alpha-position creates the enzyme-bound 2-hydroxydec-4-enoyl-ACP thioester, which may be prone to spontaneous hydrolysis to yield 2-hydroxydec-4-enoic acid due to increased electrophilicity of the carbonyl. 2-hydroxydec-4-enoic acid can then be further oxidized by poxM to yield the alpha-ketoacid 2-oxodec-4-enoicacid, which is reductively aminated by the aminotransferase poxL to yield (S,E)-2-aminodec-4-enoic acid. The Hybrid PKS-NRPS synthetase poxE then performs condensation between the octaketide product of its PKS modules and the amino group of (S,E)-2-aminodec-4-enoic acid which is activated and incorporated by the adenylation domain. The resulting aminoacyl product can be cyclized by the Diels-Alderase PoxQ and reductively released by the reductive (R) domain of poxE to yield an aldehyde intermediate. The released aldehyde is then substrate for a Knoevenagel condensation by the hydrolyase poxO followed by an oxidation at the 5-position of the pyrrolidone ring. The presence of the olefin from the amino acid building block allows for migration of the substituted allyl group to occur. This allylic transposition reaction takes place in a conjugate addition, semipinacol-like fashion to yield a succinimide intermediate. Iterative two-electron oxidations of the C7 methyl of the succinimide intermediate to the carboxylic acid can be catalyzed by one of two remaining cytochrome P450 monooxygenasess poxC or poxD to yield oxaleimide A. Subsequent oxidation yields the maleimide scaffold oxaleimide I. Both oxaleimide A and oxaleimide I can undergo oxidative modifications in the decalin ring to yield the series of products oxaleimides B to H. The protein is Aminotransferase poxL of Penicillium oxalicum (strain 114-2 / CGMCC 5302) (Penicillium decumbens).